Consider the following 107-residue polypeptide: Nucleoid-associated protein NE0434 (107 aa).

The protein belongs to the YbaB/EbfC family. As to quaternary structure, homodimer.

The protein localises to the cytoplasm. It is found in the nucleoid. Binds to DNA and alters its conformation. May be involved in regulation of gene expression, nucleoid organization and DNA protection. The protein is Nucleoid-associated protein NE0434 of Nitrosomonas europaea (strain ATCC 19718 / CIP 103999 / KCTC 2705 / NBRC 14298).